The chain runs to 57 residues: Large ribosomal subunit protein bL32 (57 aa).

The segment covering 1 to 19 (MAVPKRRKSRSNTRSRRSQ) has biased composition (basic residues). A disordered region spans residues 1 to 22 (MAVPKRRKSRSNTRSRRSQWKA).

This sequence belongs to the bacterial ribosomal protein bL32 family.

This is Large ribosomal subunit protein bL32 from Mycobacterium tuberculosis (strain ATCC 25177 / H37Ra).